We begin with the raw amino-acid sequence, 335 residues long: NADH-quinone oxidoreductase subunit H (335 aa).

A run of 8 helical transmembrane segments spans residues 11–31 (VILT…CGAL), 81–101 (VIFT…FVVI), 114–134 (IGLL…LFAG), 154–174 (VSYE…VGSF), 187–207 (LWFI…GVAV), 238–258 (FFVG…TLFF), 270–290 (QLSF…FILL), and 307–327 (WKFC…IVLY).

This sequence belongs to the complex I subunit 1 family. NDH-1 is composed of 13 different subunits. Subunits NuoA, H, J, K, L, M, N constitute the membrane sector of the complex.

The protein resides in the cell inner membrane. It carries out the reaction a quinone + NADH + 5 H(+)(in) = a quinol + NAD(+) + 4 H(+)(out). NDH-1 shuttles electrons from NADH, via FMN and iron-sulfur (Fe-S) centers, to quinones in the respiratory chain. The immediate electron acceptor for the enzyme in this species is believed to be ubiquinone. Couples the redox reaction to proton translocation (for every two electrons transferred, four hydrogen ions are translocated across the cytoplasmic membrane), and thus conserves the redox energy in a proton gradient. This subunit may bind ubiquinone. The protein is NADH-quinone oxidoreductase subunit H of Pseudomonas putida (strain ATCC 700007 / DSM 6899 / JCM 31910 / BCRC 17059 / LMG 24140 / F1).